The primary structure comprises 204 residues: Thymidylate kinase (204 aa).

Residue glycine 11 to threonine 18 participates in ATP binding.

It belongs to the thymidylate kinase family.

It catalyses the reaction dTMP + ATP = dTDP + ADP. It functions in the pathway pyrimidine metabolism; dTTP biosynthesis. This is Thymidylate kinase (TMK) from Vaccinia virus (strain Ankara) (VACV).